The primary structure comprises 290 residues: Membrane protein insertase YidC 1 (290 aa).

The first 19 residues, 1–19 (MKKKALLPLFLGIMIFLAG), serve as a signal peptide directing secretion. A lipid anchor (N-palmitoyl cysteine) is attached at Cys-20. Cys-20 carries the S-diacylglycerol cysteine lipid modification. 5 consecutive transmembrane segments (helical) span residues 56–76 (FGLA…PFML), 134–154 (MLGC…YFVL), 176–196 (PDIW…VVSS), 211–231 (MVIS…ALGL), and 232–252 (YWSV…IYYS). The disordered stretch occupies residues 270–290 (HNPYSKKKGKNTQVVSKKNKK). Residues 280–290 (NTQVVSKKNKK) show a composition bias toward polar residues.

Belongs to the OXA1/ALB3/YidC family. Type 2 subfamily.

It localises to the cell membrane. In terms of biological role, required for the insertion and/or proper folding and/or complex formation of integral membrane proteins into the membrane. Involved in integration of membrane proteins that insert both dependently and independently of the Sec translocase complex, as well as at least some lipoproteins. In Staphylococcus epidermidis (strain ATCC 12228 / FDA PCI 1200), this protein is Membrane protein insertase YidC 1.